Consider the following 168-residue polypeptide: Crossover junction endodeoxyribonuclease RuvC (168 aa).

Catalysis depends on residues aspartate 8, glutamate 68, and aspartate 140. Mg(2+)-binding residues include aspartate 8, glutamate 68, and aspartate 140.

The protein belongs to the RuvC family. In terms of assembly, homodimer which binds Holliday junction (HJ) DNA. The HJ becomes 2-fold symmetrical on binding to RuvC with unstacked arms; it has a different conformation from HJ DNA in complex with RuvA. In the full resolvosome a probable DNA-RuvA(4)-RuvB(12)-RuvC(2) complex forms which resolves the HJ. The cofactor is Mg(2+).

The protein localises to the cytoplasm. The enzyme catalyses Endonucleolytic cleavage at a junction such as a reciprocal single-stranded crossover between two homologous DNA duplexes (Holliday junction).. In terms of biological role, the RuvA-RuvB-RuvC complex processes Holliday junction (HJ) DNA during genetic recombination and DNA repair. Endonuclease that resolves HJ intermediates. Cleaves cruciform DNA by making single-stranded nicks across the HJ at symmetrical positions within the homologous arms, yielding a 5'-phosphate and a 3'-hydroxyl group; requires a central core of homology in the junction. The consensus cleavage sequence is 5'-(A/T)TT(C/G)-3'. Cleavage occurs on the 3'-side of the TT dinucleotide at the point of strand exchange. HJ branch migration catalyzed by RuvA-RuvB allows RuvC to scan DNA until it finds its consensus sequence, where it cleaves and resolves the cruciform DNA. This Gluconacetobacter diazotrophicus (strain ATCC 49037 / DSM 5601 / CCUG 37298 / CIP 103539 / LMG 7603 / PAl5) protein is Crossover junction endodeoxyribonuclease RuvC.